The chain runs to 318 residues: Ribosomal RNA small subunit methyltransferase H (318 aa).

S-adenosyl-L-methionine is bound by residues 38–40 (AGH), aspartate 57, leucine 91, aspartate 105, and glutamine 112.

It belongs to the methyltransferase superfamily. RsmH family.

It localises to the cytoplasm. It carries out the reaction cytidine(1402) in 16S rRNA + S-adenosyl-L-methionine = N(4)-methylcytidine(1402) in 16S rRNA + S-adenosyl-L-homocysteine + H(+). Its function is as follows. Specifically methylates the N4 position of cytidine in position 1402 (C1402) of 16S rRNA. The protein is Ribosomal RNA small subunit methyltransferase H of Clavibacter michiganensis subsp. michiganensis (strain NCPPB 382).